Reading from the N-terminus, the 84-residue chain is Large ribosomal subunit protein bL27 (84 aa).

It belongs to the bacterial ribosomal protein bL27 family.

In Karelsulcia muelleri (strain GWSS) (Sulcia muelleri), this protein is Large ribosomal subunit protein bL27.